Reading from the N-terminus, the 145-residue chain is uncharacterized protein (145 aa).

This is an uncharacterized protein from Rickettsia prowazekii (strain Madrid E).